Consider the following 836-residue polypeptide: Eukaryotic translation initiation factor 3 subunit C (836 aa).

The tract at residues 1–97 (MSRFFVSGYD…RRVVKSAKEK (97 aa)) is disordered. A compositionally biased stretch (acidic residues) spans 13–55 (SSSEEEDLLTSSEEELMSSEQESDSEFDDEFANDDDSDSSDSD). A compositionally biased stretch (basic and acidic residues) spans 86–97 (EGRRVVKSAKEK). In terms of domain architecture, PCI spans 586 to 761 (FHMHINLELL…KSINFVSSEH (176 aa)). Residues 783-817 (DKNEKTASNGHGRKTTQQQQQQQQKEQREQTHDEN) are disordered. The segment covering 797–806 (TTQQQQQQQQ) has biased composition (low complexity). The segment covering 807–817 (KEQREQTHDEN) has biased composition (basic and acidic residues).

Belongs to the eIF-3 subunit C family. As to quaternary structure, component of the eukaryotic translation initiation factor 3 (eIF-3) complex.

The protein resides in the cytoplasm. Functionally, component of the eukaryotic translation initiation factor 3 (eIF-3) complex, which is involved in protein synthesis of a specialized repertoire of mRNAs and, together with other initiation factors, stimulates binding of mRNA and methionyl-tRNAi to the 40S ribosome. The eIF-3 complex specifically targets and initiates translation of a subset of mRNAs involved in cell proliferation. The polypeptide is Eukaryotic translation initiation factor 3 subunit C (Meyerozyma guilliermondii (strain ATCC 6260 / CBS 566 / DSM 6381 / JCM 1539 / NBRC 10279 / NRRL Y-324) (Yeast)).